We begin with the raw amino-acid sequence, 261 residues long: Triosephosphate isomerase (261 aa).

10-12 (NWK) provides a ligand contact to substrate. The active-site Electrophile is H100. The active-site Proton acceptor is the E172. Substrate contacts are provided by residues G178, S218, and 239-240 (GG).

The protein belongs to the triosephosphate isomerase family. In terms of assembly, homodimer.

The protein localises to the cytoplasm. It carries out the reaction D-glyceraldehyde 3-phosphate = dihydroxyacetone phosphate. It functions in the pathway carbohydrate biosynthesis; gluconeogenesis. Its pathway is carbohydrate degradation; glycolysis; D-glyceraldehyde 3-phosphate from glycerone phosphate: step 1/1. Its function is as follows. Involved in the gluconeogenesis. Catalyzes stereospecifically the conversion of dihydroxyacetone phosphate (DHAP) to D-glyceraldehyde-3-phosphate (G3P). The polypeptide is Triosephosphate isomerase (Mycobacterium bovis (strain BCG / Pasteur 1173P2)).